Reading from the N-terminus, the 456-residue chain is MSTTRKRLFIKTYGCQMNVYDSDRMKDVLTPLGYESAETPEGADLVILNTCHIREKAAEKVYSELGRLRPLKDEKAASGGMTIAVAGCVAQAEGAEIMKRAPVVDLVVGPQTYHKLPELIAQAHRAKGEALDTEFEVEDKFDRLGSDRQVEGYSAFVTVQEGCDKFCTFCVVPYTRGAEWSRPVDQIVAEIRALAAKGIREVTLLGQNVNAFHGAPPSGREAEGAWGLGQLVRHVALIGGIERIRFTTSHPRDMDEVLIQAFADTPKLMPYFHLPVQAGSDKILKSMNRQHTAEEYVAIIDRLRAARPDIAISGDMIVGFPGETDADFEATLDLVRRVKFASCFSFKYSKRPGTPGAAMFNQVDEGVKSARLAVLQELLSDQQAAFNESMIGRTLPVLFEKPGRMGGQLHGRSPYLQSVHVDGPAELIGQVGEVRIEAASRNSLSGSLTGSKRSAA.

The MTTase N-terminal domain maps to 6-125; that stretch reads KRLFIKTYGC…LPELIAQAHR (120 aa). [4Fe-4S] cluster contacts are provided by Cys15, Cys51, Cys88, Cys163, Cys167, and Cys170. Residues 149–385 form the Radical SAM core domain; it reads QVEGYSAFVT…QELLSDQQAA (237 aa). The TRAM domain maps to 388-450; the sequence is ESMIGRTLPV…RNSLSGSLTG (63 aa).

Belongs to the methylthiotransferase family. MiaB subfamily. In terms of assembly, monomer. Requires [4Fe-4S] cluster as cofactor.

It is found in the cytoplasm. The catalysed reaction is N(6)-dimethylallyladenosine(37) in tRNA + (sulfur carrier)-SH + AH2 + 2 S-adenosyl-L-methionine = 2-methylsulfanyl-N(6)-dimethylallyladenosine(37) in tRNA + (sulfur carrier)-H + 5'-deoxyadenosine + L-methionine + A + S-adenosyl-L-homocysteine + 2 H(+). Its function is as follows. Catalyzes the methylthiolation of N6-(dimethylallyl)adenosine (i(6)A), leading to the formation of 2-methylthio-N6-(dimethylallyl)adenosine (ms(2)i(6)A) at position 37 in tRNAs that read codons beginning with uridine. In Maricaulis maris (strain MCS10) (Caulobacter maris), this protein is tRNA-2-methylthio-N(6)-dimethylallyladenosine synthase.